We begin with the raw amino-acid sequence, 839 residues long: LPS-assembly protein LptD (839 aa).

Positions Met1 to Ser21 are cleaved as a signal peptide.

This sequence belongs to the LptD family. In terms of assembly, component of the lipopolysaccharide transport and assembly complex. Interacts with LptE and LptA.

It is found in the cell outer membrane. Its function is as follows. Together with LptE, is involved in the assembly of lipopolysaccharide (LPS) at the surface of the outer membrane. This Legionella pneumophila (strain Paris) protein is LPS-assembly protein LptD.